A 1691-amino-acid chain; its full sequence is ADAMTS-like protein 3 (1691 aa).

Positions 1–26 (MASWTSPWWVLIGMVFMHSPLPQTTA) are cleaved as a signal peptide. The region spanning 75–124 (DGNWDAWGDWSDCSRTCGGGASYSLRRCLTGRNCEGQNIRYKTCSNHDCP) is the TSP type-1 1 domain. Disulfide bonds link Cys87-Cys118, Cys91-Cys123, and Cys102-Cys108. Residue Asn293 is glycosylated (N-linked (GlcNAc...) asparagine). 3 consecutive TSP type-1 domains span residues 418–468 (PLPR…APKP), 478–535 (DCPK…IPCY), and 564–626 (EEPT…EACD). 3 disulfides stabilise this stretch: Cys576–Cys620, Cys580–Cys625, and Cys591–Cys609. N-linked (GlcNAc...) asparagine glycosylation is present at Asn681. TSP type-1 domains lie at 703-760 (CPPR…FDCP), 763-818 (WHIE…ARTD), and 819-881 (CPPH…PECS). The N-linked (GlcNAc...) asparagine glycan is linked to Asn797. Disulfide bonds link Cys831–Cys875, Cys835–Cys880, and Cys846–Cys863. Residues 896-992 (PQILSVQRVY…IAGSAQETVV (97 aa)) form the Ig-like C2-type 1 domain. N-linked (GlcNAc...) asparagine glycosylation is found at Asn915 and Asn927. A disulfide bond links Cys934 and Cys982. N-linked (GlcNAc...) asparagine glycosylation occurs at Asn1102. A disordered region spans residues 1146–1184 (PPAAQLRGETGSVSQSSHAKNSGKLTFKPKGPVLMRQSQ). Residues 1156 to 1169 (GSVSQSSHAKNSGK) are compositionally biased toward polar residues. Positions 1185-1279 (PPSISFNKTI…GSDVESSSVL (95 aa)) constitute an Ig-like C2-type 2 domain. Residue Asn1191 is glycosylated (N-linked (GlcNAc...) asparagine). An intrachain disulfide couples Cys1215 to Cys1263. N-linked (GlcNAc...) asparagine glycosylation is found at Asn1292, Asn1316, Asn1330, Asn1343, Asn1349, Asn1356, Asn1432, Asn1516, Asn1574, and Asn1591. In terms of domain architecture, Ig-like C2-type 3 spans 1296–1378 (PEHNHLSVVV…ATNALGKAVA (83 aa)). An intrachain disulfide couples Cys1321 to Cys1367. 2 consecutive TSP type-1 domains span residues 1424 to 1482 (QEPF…NIRD) and 1483 to 1545 (CPAR…HPCV). The 48-residue stretch at 1597–1644 (CDVCWHTGPWKPCTAACGRGFQSRKVDCIHTRSCKPVAKRHCVQKKKP) folds into the TSP type-1 10 domain. The PLAC domain occupies 1655 to 1691 (CDRDCTDTTHYCMFVKHLNLCSLDRYKQRCCQSCQEG).

Post-translationally, glycosylated. Can be O-fucosylated by POFUT2 on a serine or a threonine residue found within the consensus sequence C1-X(2)-(S/T)-C2-G of the TSP type-1 repeat domains where C1 and C2 are the first and second cysteine residue of the repeat, respectively. Fucosylated repeats can then be further glycosylated by the addition of a beta-1,3-glucose residue by the glucosyltransferase, B3GALTL. Fucosylation mediates the efficient secretion of ADAMTS family members. Can also be C-glycosylated with one or two mannose molecules on tryptophan residues within the consensus sequence W-X-X-W of the TPRs, and N-glycosylated. These other glycosylations can also facilitate secretion. As to expression, expressed in epithelial cells of the colon, fallopian tube, skin, breast, prostate, epididymis, liver, pancreatic islets and bile ducts, as well as by vascular endothelial cells, smooth muscle cells, fibroblasts, cortical and ganglionic neurons and cardiac myocytes. Also expressed by malignant epithelial cells in colon cancer, as well as breast, prostate, renal and skin tumors. Expression is significantly reduced in colon cancer compared to normal colon.

The protein localises to the secreted. The protein resides in the extracellular space. It is found in the extracellular matrix. The protein is ADAMTS-like protein 3 (ADAMTSL3) of Homo sapiens (Human).